We begin with the raw amino-acid sequence, 498 residues long: Glycerol kinase (498 aa).

T13 provides a ligand contact to ADP. T13, T14, and S15 together coordinate ATP. A sn-glycerol 3-phosphate-binding site is contributed by T13. Position 17 (R17) interacts with ADP. Sn-glycerol 3-phosphate contacts are provided by R83, E84, Y135, and D244. Glycerol contacts are provided by R83, E84, Y135, D244, and Q245. T266 and G309 together coordinate ADP. 4 residues coordinate ATP: T266, G309, Q313, and G410. 2 residues coordinate ADP: G410 and N414.

This sequence belongs to the FGGY kinase family.

The enzyme catalyses glycerol + ATP = sn-glycerol 3-phosphate + ADP + H(+). It participates in polyol metabolism; glycerol degradation via glycerol kinase pathway; sn-glycerol 3-phosphate from glycerol: step 1/1. Its activity is regulated as follows. Inhibited by fructose 1,6-bisphosphate (FBP). Its function is as follows. Key enzyme in the regulation of glycerol uptake and metabolism. Catalyzes the phosphorylation of glycerol to yield sn-glycerol 3-phosphate. The polypeptide is Glycerol kinase (Koribacter versatilis (strain Ellin345)).